The sequence spans 210 residues: Thymidylate kinase (210 aa).

Position 11 to 18 (11 to 18 (GLEGAGKS)) interacts with ATP.

Belongs to the thymidylate kinase family.

It carries out the reaction dTMP + ATP = dTDP + ADP. Phosphorylation of dTMP to form dTDP in both de novo and salvage pathways of dTTP synthesis. The protein is Thymidylate kinase of Vibrio campbellii (strain ATCC BAA-1116).